We begin with the raw amino-acid sequence, 209 residues long: Ribosomal RNA large subunit methyltransferase E (209 aa).

S-adenosyl-L-methionine contacts are provided by glycine 63, tryptophan 65, aspartate 83, aspartate 99, and aspartate 124. Catalysis depends on lysine 164, which acts as the Proton acceptor.

It belongs to the class I-like SAM-binding methyltransferase superfamily. RNA methyltransferase RlmE family.

It localises to the cytoplasm. It carries out the reaction uridine(2552) in 23S rRNA + S-adenosyl-L-methionine = 2'-O-methyluridine(2552) in 23S rRNA + S-adenosyl-L-homocysteine + H(+). Specifically methylates the uridine in position 2552 of 23S rRNA at the 2'-O position of the ribose in the fully assembled 50S ribosomal subunit. The protein is Ribosomal RNA large subunit methyltransferase E of Aeromonas salmonicida (strain A449).